The chain runs to 600 residues: ATP-dependent lipid A-core flippase (600 aa).

Helical transmembrane passes span Thr-28–Ile-48, Val-80–Phe-100, Ala-159–Phe-179, Trp-182–Val-202, Val-267–Ala-287, and Glu-295–Ile-315. One can recognise an ABC transmembrane type-1 domain in the interval Leu-29 to Arg-327. Residues Leu-359 to Met-596 form the ABC transporter domain. Gly-393 to Ser-400 provides a ligand contact to ATP.

Belongs to the ABC transporter superfamily. Lipid exporter (TC 3.A.1.106) family. In terms of assembly, homodimer.

The protein resides in the cell inner membrane. It carries out the reaction ATP + H2O + lipid A-core oligosaccharideSide 1 = ADP + phosphate + lipid A-core oligosaccharideSide 2.. In terms of biological role, involved in lipopolysaccharide (LPS) biosynthesis. Translocates lipid A-core from the inner to the outer leaflet of the inner membrane. Transmembrane domains (TMD) form a pore in the inner membrane and the ATP-binding domain (NBD) is responsible for energy generation. The chain is ATP-dependent lipid A-core flippase from Shewanella denitrificans (strain OS217 / ATCC BAA-1090 / DSM 15013).